A 413-amino-acid polypeptide reads, in one-letter code: Multidrug resistance protein MdtA (413 aa).

Positions 1-32 (MNAKRIRGLLIFAAVIAIAVLIWRHFTQTSPA) are cleaved as a signal peptide. Over residues 32–46 (AAPGTSEQHAARTSH) the composition is skewed to polar residues. The tract at residues 32-59 (AAPGTSEQHAARTSHSGNNSSGNGGGRR) is disordered.

The protein belongs to the membrane fusion protein (MFP) (TC 8.A.1) family. As to quaternary structure, part of a tripartite efflux system composed of MdtA, MdtB and MdtC.

The protein resides in the cell inner membrane. The chain is Multidrug resistance protein MdtA from Pectobacterium carotovorum subsp. carotovorum (strain PC1).